Consider the following 319-residue polypeptide: N-acyl-aromatic-L-amino acid amidohydrolase (carboxylate-forming) (319 aa).

The hydrolytic domain stretch occupies residues 1-210; it reads MCSLPVPREP…TVLDFIELFN (210 aa). Zn(2+) is bound by residues histidine 21 and glutamate 24. Substrate contacts are provided by residues arginine 63 and 70–71; that span reads NR. Histidine 116 provides a ligand contact to Zn(2+). Glutamate 178 and tyrosine 288 together coordinate substrate. Residues 211 to 318 form a shielding domain region; it reads QGTAFPAFEM…PALTPAPSPA (108 aa).

Belongs to the AspA/AstE family. Aspartoacylase subfamily. Exists as a mixture of homodimers and homotetramer, both catalytically active. As to quaternary structure, (Microbial infection) Interacts with hepatitis C virus/HCV core protein. Requires Zn(2+) as cofactor.

Its subcellular location is the apical cell membrane. It is found in the cytoplasm. It carries out the reaction an N-acyl-aromatic L-alpha-amino acid + H2O = an aromatic L-alpha-amino acid + a carboxylate. The catalysed reaction is an N-acetyl-L-cysteine-S-conjugate + H2O = an S-substituted L-cysteine + acetate. Its function is as follows. Plays an important role in deacetylating mercapturic acids in kidney proximal tubules. Also acts on N-acetyl-aromatic amino acids. The chain is N-acyl-aromatic-L-amino acid amidohydrolase (carboxylate-forming) (ACY3) from Homo sapiens (Human).